A 482-amino-acid chain; its full sequence is Aspartyl/glutamyl-tRNA(Asn/Gln) amidotransferase subunit B (482 aa).

Belongs to the GatB/GatE family. GatB subfamily. In terms of assembly, heterotrimer of A, B and C subunits.

It carries out the reaction L-glutamyl-tRNA(Gln) + L-glutamine + ATP + H2O = L-glutaminyl-tRNA(Gln) + L-glutamate + ADP + phosphate + H(+). It catalyses the reaction L-aspartyl-tRNA(Asn) + L-glutamine + ATP + H2O = L-asparaginyl-tRNA(Asn) + L-glutamate + ADP + phosphate + 2 H(+). In terms of biological role, allows the formation of correctly charged Asn-tRNA(Asn) or Gln-tRNA(Gln) through the transamidation of misacylated Asp-tRNA(Asn) or Glu-tRNA(Gln) in organisms which lack either or both of asparaginyl-tRNA or glutaminyl-tRNA synthetases. The reaction takes place in the presence of glutamine and ATP through an activated phospho-Asp-tRNA(Asn) or phospho-Glu-tRNA(Gln). The polypeptide is Aspartyl/glutamyl-tRNA(Asn/Gln) amidotransferase subunit B (Thermotoga petrophila (strain ATCC BAA-488 / DSM 13995 / JCM 10881 / RKU-1)).